The sequence spans 282 residues: Reaction center protein L chain (282 aa).

Over 2 to 32 (ALLSFERKYRVPGGTLVGGNLFDFWVGPFYV) the chain is Cytoplasmic. A helical membrane pass occupies residues 33 to 56 (GFFGVATFFFAALGIILIAWSAVL). The Periplasmic segment spans residues 57–83 (QGTWNPQLISVYPPALEYGLGGAPLAK). The chain crosses the membrane as a helical span at residues 84-112 (GGLWQIITICATGAFVSWALREVEICRKL). Over 113–116 (GIGY) the chain is Cytoplasmic. A helical membrane pass occupies residues 117-139 (HIPFAFAFAILAYLTLVLFRPVM). Residues 140 to 171 (MGAWGYAFPYGIWTHLDWVSNTGYTYGNFHYN) lie on the Periplasmic side of the membrane. The (7R,8Z)-bacteriochlorophyll b site is built by histidine 154 and histidine 174. A helical transmembrane segment spans residues 172-199 (PAHMIAISFFFTNALALALHGALVLSAA). Position 191 (histidine 191) interacts with Fe cation. Residues 200-225 (NPEKGKEMRTPDHEDTFFRDLVGYSI) lie on the Cytoplasmic side of the membrane. Residue phenylalanine 217 coordinates a ubiquinone. The chain crosses the membrane as a helical span at residues 226–251 (GTLGIHRLGLLLSLSAVFFSALCMII). Position 231 (histidine 231) interacts with Fe cation. The Periplasmic segment spans residues 252–282 (TGTIWFDQWVDWWQWWVKLPWWANIPGGING).

Belongs to the reaction center PufL/M/PsbA/D family. In terms of assembly, reaction center is composed of four bacteriochlorophylls, two bacteriopheophytins, two ubiquinones, one iron, and three highly hydrophobic polypeptide chains (designated L, M, and H).

The protein localises to the cellular chromatophore membrane. Its function is as follows. The reaction center is a membrane-bound complex that mediates the initial photochemical event in the electron transfer process of photosynthesis. This is Reaction center protein L chain (pufL) from Cereibacter sphaeroides (strain ATCC 17023 / DSM 158 / JCM 6121 / CCUG 31486 / LMG 2827 / NBRC 12203 / NCIMB 8253 / ATH 2.4.1.) (Rhodobacter sphaeroides).